A 389-amino-acid chain; its full sequence is Trans-2-enoyl-CoA reductase [NADH] (389 aa).

NAD(+)-binding positions include G47–Y52, F73–E74, D110–A111, and L138–A139. Residue Y224 participates in substrate binding. The active-site Proton donor is Y234. NAD(+) contacts are provided by residues K243 and L272–T274.

Belongs to the TER reductase family. In terms of assembly, monomer.

It carries out the reaction a 2,3-saturated acyl-CoA + NAD(+) = a (2E)-enoyl-CoA + NADH + H(+). Its pathway is lipid metabolism; fatty acid biosynthesis. Its function is as follows. Involved in the fatty acid synthesis (FAS II). Catalyzes the reduction of a carbon-carbon double bond in an enoyl moiety that is covalently linked to a coenzyme A (CoA). This is Trans-2-enoyl-CoA reductase [NADH] from Clostridium perfringens (strain SM101 / Type A).